A 506-amino-acid chain; its full sequence is Histidine ammonia-lyase (506 aa).

A cross-link (5-imidazolinone (Ala-Gly)) is located at residues 143 to 145 (ASG). Ser-144 carries the 2,3-didehydroalanine (Ser) modification.

This sequence belongs to the PAL/histidase family. In terms of processing, contains an active site 4-methylidene-imidazol-5-one (MIO), which is formed autocatalytically by cyclization and dehydration of residues Ala-Ser-Gly.

It localises to the cytoplasm. It carries out the reaction L-histidine = trans-urocanate + NH4(+). Its pathway is amino-acid degradation; L-histidine degradation into L-glutamate; N-formimidoyl-L-glutamate from L-histidine: step 1/3. This is Histidine ammonia-lyase from Enterobacter sp. (strain 638).